Here is a 606-residue protein sequence, read N- to C-terminus: Large subunit GTPase 1 homolog (606 aa).

Residues 1–21 are disordered; that stretch reads MGKKNKGGAPNLGRQLIKDRF. Residues 165 to 395 enclose the CP-type G domain; the sequence is WRQLWRVVER…LCDCPGLVMP (231 aa). GTP is bound at residue 213 to 216; it reads NKSD. Phosphoserine is present on residues Ser-276 and Ser-279. GTP-binding positions include 344–351 and 388–391; these read GYPNVGKS and DCPG. The disordered stretch occupies residues 574-606; that stretch reads LVAGNDPAAKPWRHVKKERREKLRKKFSHLDEH. Basic residues predominate over residues 584–600; it reads PWRHVKKERREKLRKKF.

It belongs to the TRAFAC class YlqF/YawG GTPase family. LSG1 subfamily. In terms of tissue distribution, expressed in larval serotonergic neurons.

Its subcellular location is the cytoplasm. In terms of biological role, GTPase required for the nuclear export of the 60S ribosomal subunit. Probably acts by mediating the release of Nmd3 from the 60S ribosomal subunit after export into the cytoplasm. Regulator of body size; acts in serotonergic neurons to regulate insulin signaling and thus exerts global growth control. The protein is Large subunit GTPase 1 homolog (Ns3) of Drosophila melanogaster (Fruit fly).